Consider the following 531-residue polypeptide: Bifunctional protein TrpGD (531 aa).

A Glutamine amidotransferase type-1 domain is found at 3 to 196 (DILLLDNIDS…LAWAQQKLEP (194 aa)). 57-59 (GPG) provides a ligand contact to L-glutamine. Cys84 (nucleophile; for GATase activity) is an active-site residue. L-glutamine-binding positions include Gln88 and 134–135 (SL). Catalysis depends on for GATase activity residues His170 and Glu172. The anthranilate phosphoribosyltransferase stretch occupies residues 202-531 (PILEKLYQAQ…DRVTALAARG (330 aa)).

The protein in the C-terminal section; belongs to the anthranilate phosphoribosyltransferase family. Heterotetramer consisting of two non-identical subunits: a beta subunit (TrpG) and a large alpha subunit (TrpE).

The catalysed reaction is chorismate + L-glutamine = anthranilate + pyruvate + L-glutamate + H(+). It carries out the reaction N-(5-phospho-beta-D-ribosyl)anthranilate + diphosphate = 5-phospho-alpha-D-ribose 1-diphosphate + anthranilate. Its pathway is amino-acid biosynthesis; L-tryptophan biosynthesis; L-tryptophan from chorismate: step 1/5. It participates in amino-acid biosynthesis; L-tryptophan biosynthesis; L-tryptophan from chorismate: step 2/5. Its activity is regulated as follows. Cooperatively feedback inhibited by tryptophan. Part of a heterotetrameric complex that catalyzes the two-step biosynthesis of anthranilate, an intermediate in the biosynthesis of L-tryptophan. In the first step, the glutamine-binding beta subunit (TrpG) of anthranilate synthase (AS) provides the glutamine amidotransferase activity which generates ammonia as a substrate that, along with chorismate, is used in the second step, catalyzed by the large alpha subunit of AS (TrpE) to produce anthranilate. In the absence of TrpG, TrpE can synthesize anthranilate directly from chorismate and high concentrations of ammonia. In addition to synthesizing anthranilate, it also catalyzes the second step of the pathway, the transfer of the phosphoribosyl group of 5-phosphorylribose-1-pyrophosphate (PRPP) to anthranilate. This is Bifunctional protein TrpGD (trpGD) from Escherichia coli (strain K12).